A 615-amino-acid polypeptide reads, in one-letter code: 9-cis-epoxycarotenoid dioxygenase NCED1, chloroplastic (615 aa).

Residues 1–41 constitute a chloroplast transit peptide; the sequence is MPSPASNTWINTTLPSSCSSPFKDLASTSSSPTTLLPFKKR. 2 disordered regions span residues 20–45 and 62–101; these read SPFKDLASTSSSPTTLLPFKKRSSSN and YQPTSTSTTTTPTPIKPTTTTTTTTPHRETKPLSDTKQPF. Low complexity-rich tracts occupy residues 27–37 and 64–86; these read STSSSPTTLLP and PTSTSTTTTPTPIKPTTTTTTTT. The Fe cation site is built by histidine 316, histidine 365, and histidine 430. Residues 571 to 592 are a coiled coil; that stretch reads KEWKSELQIVNAQNLKLEASIK. A Fe cation-binding site is contributed by histidine 602.

This sequence belongs to the carotenoid oxygenase family. Fe(2+) serves as cofactor.

Its subcellular location is the plastid. It is found in the chloroplast thylakoid membrane. It carries out the reaction a 9-cis-epoxycarotenoid + O2 = a 12'-apo-carotenal + 2-cis,4-trans-xanthoxin. It catalyses the reaction 9-cis-violaxanthin + O2 = (3S,5R,6S)-5,6-epoxy-3-hydroxy-5,6-dihydro-12'-apo-beta-caroten-12'-al + 2-cis,4-trans-xanthoxin. The catalysed reaction is 9'-cis-neoxanthin + O2 = (3S,5R,6R)-3,5-dihydroxy-6,7-didehydro-5,6-dihydro-12'-apo-beta-caroten-12'-al + 2-cis,4-trans-xanthoxin. In terms of biological role, has a 11,12(11',12') 9-cis epoxycarotenoid cleavage activity. Catalyzes the first step of abscisic-acid biosynthesis from carotenoids, in response to water stress. Active on 9-cis-violaxanthin and 9'-cis-neoxanthin, but not on the all-trans isomers of violaxanthin and neoxanthin. The protein is 9-cis-epoxycarotenoid dioxygenase NCED1, chloroplastic (NCED1) of Phaseolus vulgaris (Kidney bean).